Consider the following 280-residue polypeptide: Undecaprenyl-diphosphatase (280 aa).

Transmembrane regions (helical) follow at residues M1–V21, F45–W65, I90–H110, V115–V135, I151–L171, I226–L246, and L260–L280.

The protein belongs to the UppP family.

It localises to the cell inner membrane. The catalysed reaction is di-trans,octa-cis-undecaprenyl diphosphate + H2O = di-trans,octa-cis-undecaprenyl phosphate + phosphate + H(+). Functionally, catalyzes the dephosphorylation of undecaprenyl diphosphate (UPP). Confers resistance to bacitracin. This chain is Undecaprenyl-diphosphatase, found in Gluconobacter oxydans (strain 621H) (Gluconobacter suboxydans).